The primary structure comprises 153 residues: Pheromone-binding protein Gp-9 (153 aa).

Residues 1–19 form the signal peptide; that stretch reads MKTLILHICIFALVAFASA. Cystine bridges form between cysteine 37-cysteine 77, cysteine 73-cysteine 129, and cysteine 118-cysteine 138.

The protein belongs to the PBP/GOBP family. Homodimer.

Its subcellular location is the secreted. Functionally, colony queen number, a major feature of social organization, is associated with worker genotype for Gp-9. Colonies are headed by either a single reproductive queen (monogyne form) or multiple queens (polygyne form). Differences in worker Gp-9 genotypes between social forms may cause differences in workers' abilities to recognize queens and regulate their numbers. The chain is Pheromone-binding protein Gp-9 from Solenopsis nigella gensterblumi (Fire ant).